Reading from the N-terminus, the 138-residue chain is ATP synthase epsilon chain (138 aa).

This sequence belongs to the ATPase epsilon chain family. F-type ATPases have 2 components, CF(1) - the catalytic core - and CF(0) - the membrane proton channel. CF(1) has five subunits: alpha(3), beta(3), gamma(1), delta(1), epsilon(1). CF(0) has three main subunits: a, b and c.

The protein resides in the cell membrane. Its function is as follows. Produces ATP from ADP in the presence of a proton gradient across the membrane. The polypeptide is ATP synthase epsilon chain (Streptococcus equi subsp. zooepidemicus (strain H70)).